We begin with the raw amino-acid sequence, 238 residues long: Hydatid disease diagnostic antigen P-29 (238 aa).

The BAR domain maps to 18 to 238 (GELVNKNEKT…AKECSMMLGE (221 aa)).

In Echinococcus granulosus (Hydatid tapeworm), this protein is Hydatid disease diagnostic antigen P-29.